The sequence spans 500 residues: NAD(P)H-quinone oxidoreductase chain 4, chloroplastic (500 aa).

Transmembrane regions (helical) follow at residues 4-24 (FPWL…IFFL), 35-55 (YTIC…CYHF), 87-107 (IGPV…AWPV), 113-130 (LFHF…GSFS), 134-154 (LLLF…LLSM), 167-187 (FILY…GVGL), 207-227 (VALE…KLPI), 242-262 (HYST…YGLI), 272-292 (AHSI…IYAA), 305-325 (IAYS…SITD), 330-350 (GAIL…FLAG), 386-406 (LALP…GIIT), 416-436 (IVIT…LLSM), and 462-482 (LFVS…PDFV).

It belongs to the complex I subunit 4 family.

The protein localises to the plastid. The protein resides in the chloroplast thylakoid membrane. The enzyme catalyses a plastoquinone + NADH + (n+1) H(+)(in) = a plastoquinol + NAD(+) + n H(+)(out). It carries out the reaction a plastoquinone + NADPH + (n+1) H(+)(in) = a plastoquinol + NADP(+) + n H(+)(out). In Guizotia abyssinica (Niger), this protein is NAD(P)H-quinone oxidoreductase chain 4, chloroplastic.